A 211-amino-acid polypeptide reads, in one-letter code: Probable transcriptional regulatory protein SgaR (211 aa).

In terms of domain architecture, Response regulatory spans 10 to 126 (EVSIVDQNPV…VLLEAVVSVA (117 aa)). Asp-15 carries the post-translational modification 4-aspartylphosphate. The HTH luxR-type domain occupies 141 to 206 (NHDPLESLTA…MAVALHVSIN (66 aa)). Residues 165–184 (NLQIAARTGISRNTVKYHLK) constitute a DNA-binding region (H-T-H motif).

Functionally, not known. Could act on the sgaA gene expression. This chain is Probable transcriptional regulatory protein SgaR (sgaR), found in Hyphomicrobium methylovorum.